An 83-amino-acid chain; its full sequence is Large ribosomal subunit protein bL27 (83 aa).

Belongs to the bacterial ribosomal protein bL27 family.

This Bifidobacterium adolescentis (strain ATCC 15703 / DSM 20083 / NCTC 11814 / E194a) protein is Large ribosomal subunit protein bL27.